Consider the following 181-residue polypeptide: Large ribosomal subunit protein bL17 (181 aa).

Low complexity predominate over residues K141–A159. The interval K141–D181 is disordered. The segment covering D171–D181 has biased composition (basic and acidic residues).

It belongs to the bacterial ribosomal protein bL17 family. In terms of assembly, part of the 50S ribosomal subunit. Contacts protein L32.

In Geotalea daltonii (strain DSM 22248 / JCM 15807 / FRC-32) (Geobacter daltonii), this protein is Large ribosomal subunit protein bL17.